Consider the following 93-residue polypeptide: Small ribosomal subunit protein uS19 (93 aa).

The protein belongs to the universal ribosomal protein uS19 family.

Its function is as follows. Protein S19 forms a complex with S13 that binds strongly to the 16S ribosomal RNA. This Helicobacter pylori (strain G27) protein is Small ribosomal subunit protein uS19.